The sequence spans 704 residues: Pentatricopeptide repeat-containing protein At4g28010 (704 aa).

PPR repeat units lie at residues L71–I105, N106–F140, N141–P175, D176–W210, S211–A245, D246–P280, C281–P315, N316–P350, N351–P385, D386–D416, D423–K453, D458–R492, N493–P527, S528–P562, D563–P597, D598–P632, and D633–L667.

The protein belongs to the PPR family. P subfamily.

The protein is Pentatricopeptide repeat-containing protein At4g28010 of Arabidopsis thaliana (Mouse-ear cress).